We begin with the raw amino-acid sequence, 129 residues long: MAFAFPDSFRFADSHEYANADGELVRVGISAFAVDQLGDIVFVDLPDVGASLAKGTSFGSVESVKAVEDMYAPIAGEVVQRNEAVLASPEELQNDPHGEGWLLVLRPSDPAELDSLMTAEAYGAKVNAG.

The Lipoyl-binding domain maps to 24–106 (LVRVGISAFA…HGEGWLLVLR (83 aa)). N6-lipoyllysine is present on K65.

The protein belongs to the GcvH family. In terms of assembly, the glycine cleavage system is composed of four proteins: P, T, L and H. It depends on (R)-lipoate as a cofactor.

Functionally, the glycine cleavage system catalyzes the degradation of glycine. The H protein shuttles the methylamine group of glycine from the P protein to the T protein. This Synechococcus sp. (strain CC9605) protein is Glycine cleavage system H protein.